The chain runs to 493 residues: Cysteine--tRNA ligase (493 aa).

Cysteine 41 contacts Zn(2+). The 'HIGH' region motif lies at 43–53 (PTVYNYPHIGN). The Zn(2+) site is built by cysteine 231, histidine 256, and glutamate 260. Positions 296-300 (KMSKS) match the 'KMSKS' region motif. An ATP-binding site is contributed by lysine 299.

The protein belongs to the class-I aminoacyl-tRNA synthetase family. As to quaternary structure, monomer. Zn(2+) is required as a cofactor.

Its subcellular location is the cytoplasm. It carries out the reaction tRNA(Cys) + L-cysteine + ATP = L-cysteinyl-tRNA(Cys) + AMP + diphosphate. This is Cysteine--tRNA ligase from Novosphingobium aromaticivorans (strain ATCC 700278 / DSM 12444 / CCUG 56034 / CIP 105152 / NBRC 16084 / F199).